Reading from the N-terminus, the 893-residue chain is AP-4 complex accessory subunit RUSC1 (893 aa).

Disordered regions lie at residues 31–223 (ELRE…GKAE), 237–332 (EKTE…KDRS), 339–358 (SPDTELPPTGSLGGSLAPPR), and 366–444 (LRSR…RAHA). The segment covering 77-87 (HGSSIENQQDP) has biased composition (polar residues). 2 stretches are compositionally biased toward low complexity: residues 95–117 (SPSDPGCSSSLSSCSDLSPDESP) and 149–165 (PSTCSPDSFCCSPDSCS). Positions 177 to 187 (SNCNALTTCQD) are enriched in polar residues. Residues 237 to 257 (EKTEAGWKTIEDSDSGRKTDE) show a composition bias toward basic and acidic residues. Pro residues-rich tracts occupy residues 373-382 (QPPPVPPRDP) and 390-399 (PPRPPPPPVP). Residues 463-598 (MAEAQSGTGQ…FHAFILGLLN (136 aa)) are interaction with TRAF6. The RUN domain maps to 515 to 659 (DVGHLVLTTL…LTFHLDLLFE (145 aa)). The segment at 599–665 (TKQLELWFSS…LLFEHHHHLP (67 aa)) is interaction with IKBKG. 2 disordered regions span residues 700-721 (RGTSGESTTDSSTPSARPPAGS) and 751-772 (HGTTAEAAQEAPPPTEQTTPGR). Low complexity-rich tracts occupy residues 702–714 (TSGESTTDSSTPS) and 754–770 (TAEAAQEAPPPTEQTTP). The 59-residue stretch at 835 to 893 (QADRAVRALCDHTAAGPDQLSFQRGELLRVIATVDEDWLRCGRDGVEGLVPVGYTSLVL) folds into the SH3 domain.

As to quaternary structure, associated component of the adapter-like complex 4 (AP-4). Interacts with IKBKG and TRAF6. Interacts with F-actin, acetylated actin, TUBB3, STX1A, KIF5B and KLC1. Post-translationally, phosphorylated on serine residues following nuclear translocation. In terms of processing, polyubiquitinated; polyubiquitination involves TRAF6. In terms of tissue distribution, expressed in brain, brain stem and spinal cord (at protein level).

It is found in the cytoplasm. The protein resides in the nucleus. The protein localises to the cytoskeleton. It localises to the cytoplasmic vesicle. Its subcellular location is the early endosome. It is found in the postsynaptic density. The protein resides in the golgi apparatus. Its function is as follows. Associates with the adapter-like complex 4 (AP-4) and may therefore play a role in vesicular trafficking of proteins at the trans-Golgi network. Signaling adapter which plays a role in neuronal differentiation. Involved in regulation of NGF-dependent neurite outgrowth. May play a role in neuronal vesicular trafficking, specifically involving pre-synaptic membrane proteins. Seems to be involved in signaling pathways that are regulated by the prolonged activation of MAPK. Can regulate the polyubiquitination of IKBKG and thus may be involved in regulation of the NF-kappa-B pathway. This Mus musculus (Mouse) protein is AP-4 complex accessory subunit RUSC1.